Reading from the N-terminus, the 175-residue chain is DELTA-stichotoxin-Hcr4a (175 aa).

The interval 1 to 10 (ALAGAIIAGA) is plays an important role in the hemolytic activity. Residues 9-28 (GASLTFQILDKVLAELGQVS) are N-terminal region. Phosphocholine is bound by residues serine 52, valine 85, serine 103, proline 105, tyrosine 131, tyrosine 135, and tyrosine 136. Residues 103–118 (SVPFDYNLYSNWWDVK) are trp-rich region, which is important for the binding to lipid membrane.

This sequence belongs to the actinoporin family. Sea anemone subfamily. Octamer or nonamer in membranes. Monomer in the soluble state.

The protein resides in the secreted. It localises to the nematocyst. The protein localises to the target cell membrane. Its function is as follows. Pore-forming protein that forms cations-selective hydrophilic pores of around 1 nm and causes cardiac stimulation and cytolysis. Pore formation is a multi-step process that involves specific recognition of membrane sphingomyelin (but neither cholesterol nor phosphatidylcholine) using aromatic rich region and adjacent phosphocholine (POC) binding site, firm binding to the membrane (mainly driven by hydrophobic interactions) accompanied by the transfer of the N-terminal region to the lipid-water interface and finally pore formation after oligomerization of monomers. The sequence is that of DELTA-stichotoxin-Hcr4a from Radianthus crispa (Leathery sea anemone).